A 190-amino-acid polypeptide reads, in one-letter code: Cancer-related nucleoside-triphosphatase homolog (190 aa).

An N-acetylalanine modification is found at Ala-2. ATP is bound by residues 9 to 16 and 109 to 116; these read GPPGVGKT and ICVIDEVG. Lys-165 is subject to N6-acetyllysine.

The protein belongs to the THEP1 NTPase family. Monomer.

The catalysed reaction is a ribonucleoside 5'-triphosphate + H2O = a ribonucleoside 5'-diphosphate + phosphate + H(+). It carries out the reaction 5-methyl-UTP + H2O = 5-methyl-UDP + phosphate + H(+). The enzyme catalyses CTP + H2O = CDP + phosphate + H(+). It catalyses the reaction ATP + H2O = ADP + phosphate + H(+). The catalysed reaction is GTP + H2O = GDP + phosphate + H(+). In terms of biological role, has nucleotide phosphatase activity towards ATP, GTP, CTP, TTP and UTP. Hydrolyzes nucleoside diphosphates with lower efficiency. This is Cancer-related nucleoside-triphosphatase homolog (NTPCR) from Bos taurus (Bovine).